The following is a 607-amino-acid chain: Elongation factor 4 (607 aa).

The 183-residue stretch at 11 to 193 (KKIRNFSIIA…QIVELVPPPT (183 aa)) folds into the tr-type G domain. GTP contacts are provided by residues 23-28 (DHGKST) and 140-143 (NKID).

This sequence belongs to the TRAFAC class translation factor GTPase superfamily. Classic translation factor GTPase family. LepA subfamily.

It localises to the cell membrane. It catalyses the reaction GTP + H2O = GDP + phosphate + H(+). Functionally, required for accurate and efficient protein synthesis under certain stress conditions. May act as a fidelity factor of the translation reaction, by catalyzing a one-codon backward translocation of tRNAs on improperly translocated ribosomes. Back-translocation proceeds from a post-translocation (POST) complex to a pre-translocation (PRE) complex, thus giving elongation factor G a second chance to translocate the tRNAs correctly. Binds to ribosomes in a GTP-dependent manner. This Exiguobacterium sp. (strain ATCC BAA-1283 / AT1b) protein is Elongation factor 4.